Reading from the N-terminus, the 272-residue chain is MQTTDLVRFKKLGKQITVLTAWDAISSSIVEAAGADVVLVGDSLGMVVLGHSTTLPVTLDQMLHHTKAVCRGFCRPLSKQPLVVCDLPFLSYQCGEDKAVEAAGTLLKNSTASAVKLEGAEPETLLVIKRLIRMGIPVMGHLGLTPQSVHQLGYKSQARDKDSQEKIFKDSKMLQESGCFAIVLEHIPAEIASRLKKHIDIPVIGIGAGSDCDGQVRVTADILGLSIAQPPFAKPLLAGRELCINALKEWINSTDLDQVNPTTKTSESKSDC.

Mg(2+)-binding residues include D42 and D86. Residues 42–43 (DS), D86, and K116 contribute to the 3-methyl-2-oxobutanoate site. E118 provides a ligand contact to Mg(2+). The active-site Proton acceptor is the E185.

The protein belongs to the PanB family. As to quaternary structure, homodecamer; pentamer of dimers. The cofactor is Mg(2+).

It is found in the cytoplasm. It carries out the reaction 3-methyl-2-oxobutanoate + (6R)-5,10-methylene-5,6,7,8-tetrahydrofolate + H2O = 2-dehydropantoate + (6S)-5,6,7,8-tetrahydrofolate. It functions in the pathway cofactor biosynthesis; (R)-pantothenate biosynthesis; (R)-pantoate from 3-methyl-2-oxobutanoate: step 1/2. Its function is as follows. Catalyzes the reversible reaction in which hydroxymethyl group from 5,10-methylenetetrahydrofolate is transferred onto alpha-ketoisovalerate to form ketopantoate. The sequence is that of 3-methyl-2-oxobutanoate hydroxymethyltransferase from Prochlorococcus marinus (strain NATL1A).